We begin with the raw amino-acid sequence, 1663 residues long: TPR repeat-containing protein DDB_G0287407 (1663 aa).

Disordered regions lie at residues 84-109 (RKTQ…QKGQ) and 326-359 (SEYS…NSNQ). The span at 89–105 (TSSNGSTSTTTTTTTTT) shows a compositional bias: low complexity. The span at 333–352 (DDGENDQSDDDDDNEDDDDF) shows a compositional bias: acidic residues. TPR repeat units lie at residues 1110–1143 (SDVW…YINN), 1150–1183 (AKVD…YTKE), 1192–1225 (AITL…CESK), 1234–1269 (ADIA…TESK), 1278–1311 (ARIL…YEAR), and 1320–1353 (SQIL…TKKI). 2 disordered regions span residues 1500–1528 (VAQP…QQQR) and 1544–1571 (QKVS…RQNT). A coiled-coil region spans residues 1516–1547 (RTQQAIQQGQQQRQQVQQQQQQVQQQMSQKVS). Composition is skewed to low complexity over residues 1518-1528 (QQAIQQGQQQR) and 1544-1563 (QKVS…QPSQ).

The chain is TPR repeat-containing protein DDB_G0287407 from Dictyostelium discoideum (Social amoeba).